A 259-amino-acid polypeptide reads, in one-letter code: 3'-5' ssDNA/RNA exonuclease TatD (259 aa).

3 residues coordinate a divalent metal cation: Glu-92, His-128, and His-153.

This sequence belongs to the metallo-dependent hydrolases superfamily. TatD-type hydrolase family. TatD subfamily. In terms of assembly, monomer. It depends on Mg(2+) as a cofactor.

Its subcellular location is the cytoplasm. Functionally, 3'-5' exonuclease that prefers single-stranded DNA and RNA. May play a role in the H(2)O(2)-induced DNA damage repair. The polypeptide is 3'-5' ssDNA/RNA exonuclease TatD (Erwinia tasmaniensis (strain DSM 17950 / CFBP 7177 / CIP 109463 / NCPPB 4357 / Et1/99)).